Consider the following 288-residue polypeptide: 3-methyl-2-oxobutanoate hydroxymethyltransferase (288 aa).

Mg(2+) is bound by residues Asp-48 and Asp-87. Residues 48–49 (DS), Asp-87, and Lys-116 contribute to the 3-methyl-2-oxobutanoate site. Glu-118 provides a ligand contact to Mg(2+). The active-site Proton acceptor is Glu-185.

It belongs to the PanB family. In terms of assembly, homodecamer; pentamer of dimers. The cofactor is Mg(2+).

Its subcellular location is the cytoplasm. It carries out the reaction 3-methyl-2-oxobutanoate + (6R)-5,10-methylene-5,6,7,8-tetrahydrofolate + H2O = 2-dehydropantoate + (6S)-5,6,7,8-tetrahydrofolate. The protein operates within cofactor biosynthesis; coenzyme A biosynthesis. Its function is as follows. Catalyzes the reversible reaction in which hydroxymethyl group from 5,10-methylenetetrahydrofolate is transferred onto alpha-ketoisovalerate to form ketopantoate. In Hyperthermus butylicus (strain DSM 5456 / JCM 9403 / PLM1-5), this protein is 3-methyl-2-oxobutanoate hydroxymethyltransferase.